The chain runs to 213 residues: Uridine kinase (213 aa).

14-21 (GASASGKS) is a binding site for ATP.

Belongs to the uridine kinase family.

The protein resides in the cytoplasm. It catalyses the reaction uridine + ATP = UMP + ADP + H(+). It carries out the reaction cytidine + ATP = CMP + ADP + H(+). Its pathway is pyrimidine metabolism; CTP biosynthesis via salvage pathway; CTP from cytidine: step 1/3. It participates in pyrimidine metabolism; UMP biosynthesis via salvage pathway; UMP from uridine: step 1/1. The protein is Uridine kinase of Vibrio campbellii (strain ATCC BAA-1116).